Here is a 130-residue protein sequence, read N- to C-terminus: Small ribosomal subunit protein uS9 (130 aa).

It belongs to the universal ribosomal protein uS9 family.

This is Small ribosomal subunit protein uS9 from Bacillus mycoides (strain KBAB4) (Bacillus weihenstephanensis).